The following is a 459-amino-acid chain: 23S rRNA (uracil-C(5))-methyltransferase RlmCD (459 aa).

In terms of domain architecture, TRAM spans 6 to 64 (PVEKNEYYDVTFEDLTHEGAGVAKVQGFPIFVPNALPEEKAQIKVTRVKKGFAFGRLIE). The [4Fe-4S] cluster site is built by Cys-77, Cys-83, Cys-86, and Cys-166. S-adenosyl-L-methionine contacts are provided by Gln-290, Tyr-319, Glu-340, and Asp-388. Cys-415 acts as the Nucleophile in catalysis.

Belongs to the class I-like SAM-binding methyltransferase superfamily. RNA M5U methyltransferase family.

The enzyme catalyses uridine(747) in 23S rRNA + S-adenosyl-L-methionine = 5-methyluridine(747) in 23S rRNA + S-adenosyl-L-homocysteine + H(+). It carries out the reaction uridine(1939) in 23S rRNA + S-adenosyl-L-methionine = 5-methyluridine(1939) in 23S rRNA + S-adenosyl-L-homocysteine + H(+). Its function is as follows. Catalyzes the formation of 5-methyl-uridine at positions 747 (m5U747) and 1939 (m5U1939) in 23S rRNA. This is 23S rRNA (uracil-C(5))-methyltransferase RlmCD (rlmCD) from Bacillus subtilis (strain 168).